Consider the following 397-residue polypeptide: MQKKSLSDIAIQGKRVLMRVDFNVPLDSNKKITDDKRIIESLPSIKKVLENGGRLILMSHLGRPKGKVNADYSLAPVATRLAELLDCPVTMAKECIGTETMQQVLALQDGEVILLENLRFHPEEEANDPDFARELASLGEVYVNDAFGTAHRAHASTEGITHYVQTAVAGFLIERELLYLGKALQEPERPFVAILGGSKISGKIDVLENLFKKVDTVLIGGAMVFTFFKAQGYEIGNSLVEESKIELALKILDEAKNKGIKLLLPVDVIVAPEISATADCHSEMITAIPEEMIGVDIGPLTAEIYRNEILSARTVLWNGPMGVFEIDNFAAGTMAVAQAMAEATAEGATTIIGGGDSAAAVAKAGLANEMTHISTGGGASLEFLEGKELPGIAALND.

Substrate is bound by residues 21–23 (DFN), Arg37, 60–63 (HLGR), Arg119, and Arg152. ATP is bound by residues Lys203, Gly294, Glu325, and 354–357 (GGDS).

Belongs to the phosphoglycerate kinase family. In terms of assembly, monomer.

It localises to the cytoplasm. The enzyme catalyses (2R)-3-phosphoglycerate + ATP = (2R)-3-phospho-glyceroyl phosphate + ADP. The protein operates within carbohydrate degradation; glycolysis; pyruvate from D-glyceraldehyde 3-phosphate: step 2/5. The polypeptide is Phosphoglycerate kinase (Pelodictyon phaeoclathratiforme (strain DSM 5477 / BU-1)).